Here is a 732-residue protein sequence, read N- to C-terminus: Cyclopenase asqI (732 aa).

His-168, His-172, and His-200 together coordinate Zn(2+).

The protein belongs to the tyrosinase family. Zn(2+) is required as a cofactor.

The enzyme catalyses (-)-cyclopenine = viridicatin + methyl isocyanate + H(+). The catalysed reaction is (-)-4'-methoxycyclopenine = 4'-methoxyviridicatin + methyl isocyanate + H(+). The protein operates within secondary metabolite biosynthesis. Its pathway is alkaloid biosynthesis. It participates in mycotoxin biosynthesis. Functionally, cyclopenase; part of the gene cluster that mediates the biosynthesis of the aspoquinolone mycotoxins. Within the pathway, the cyclopenase asqI catalyzes the conversion of 4'-methoxycyclopenin into 4'-methoxyviridicatin. Cyclopenin can also be converted into viridicatin by asqI. The first step of the pathway is catalyzed by the nonribosomal peptide synthetase asqK that condenses anthranilic acid and O-methyl-L-tyrosine to produce 4'-methoxycyclopeptin. 4'-methoxycyclopeptin is then converted to 4'-methoxydehydrocyclopeptin by the ketoglutarate-dependent dioxygenase asqJ. AsqJ also converts its first product 4'-methoxydehydrocyclopeptin to 4'-methoxycyclopenin. The following conversion of 4'-methoxycyclopenin into 4'-methoxyviridicatin is catalyzed by the cyclopenase asqI. 4'-methoxyviridicatin is the precursor of quinolone natural products, and is further converted to quinolinone B. The prenyltransferase asqH1 then catalyzes the canonical Friedel-Crafts alkylation of quinolinone B with dimethylallyl cation to yield dimethylallyl quinolone, which is subjected to FAD-dependent dehydrogenation by the FAD-linked oxidoreductase asqF to yield conjugated aryl diene. The delta(3') double bond then serves as the site of the second alkylation with DMAPP catalyzed by the prenyltransferase asqH2 to yield a carbenium ion intermediate, which can be attacked by H(2)O to yield a styrenyl quinolone containing a C3'-hydroxyprenyl chain. The FAD-dependent monooxygenase asqG performs epoxidation of the terminal C7'-C8' olefin. Finally, after dehydratation of the epoxide at C3 by asqC, the quinolone epoxide rearrangement protein asqO catalyzes an enzymatic 3-exo-tet cyclization to yield the cyclopropyl-THF ring system in aspoquinolone. The sequence is that of Cyclopenase asqI from Emericella nidulans (strain FGSC A4 / ATCC 38163 / CBS 112.46 / NRRL 194 / M139) (Aspergillus nidulans).